Consider the following 269-residue polypeptide: Ribosomal RNA small subunit methyltransferase A (269 aa).

Residues Asn18, Leu20, Gly45, Glu66, Asp91, and Asn112 each coordinate S-adenosyl-L-methionine.

This sequence belongs to the class I-like SAM-binding methyltransferase superfamily. rRNA adenine N(6)-methyltransferase family. RsmA subfamily.

The protein resides in the cytoplasm. The catalysed reaction is adenosine(1518)/adenosine(1519) in 16S rRNA + 4 S-adenosyl-L-methionine = N(6)-dimethyladenosine(1518)/N(6)-dimethyladenosine(1519) in 16S rRNA + 4 S-adenosyl-L-homocysteine + 4 H(+). In terms of biological role, specifically dimethylates two adjacent adenosines (A1518 and A1519) in the loop of a conserved hairpin near the 3'-end of 16S rRNA in the 30S particle. May play a critical role in biogenesis of 30S subunits. In Shewanella loihica (strain ATCC BAA-1088 / PV-4), this protein is Ribosomal RNA small subunit methyltransferase A.